The primary structure comprises 199 residues: Thymidine kinase (199 aa).

ATP-binding positions include 23–30 and 95–98; these read GSMFSGKT and DEAQ. Glutamate 96 functions as the Proton acceptor in the catalytic mechanism. 4 residues coordinate Zn(2+): cysteine 152, cysteine 155, cysteine 184, and cysteine 187.

The protein belongs to the thymidine kinase family. In terms of assembly, homotetramer.

It is found in the cytoplasm. It carries out the reaction thymidine + ATP = dTMP + ADP + H(+). The protein is Thymidine kinase of Bacteroides fragilis (strain YCH46).